Reading from the N-terminus, the 84-residue chain is MAGTTGERPFSDIITSVRYWVIHSITIPALFIAGWLFVSTGLAYDVFGTPRPDSYYAQEQRSIPLVTDRFEAKQQVETFLEQLK.

Residues 2-20 are Cytoplasmic-facing; it reads AGTTGERPFSDIITSVRYW. Residues 21-35 form a helical membrane-spanning segment; it reads VIHSITIPALFIAGW. H23 is a binding site for heme. The Lumenal segment spans residues 36–84; sequence LFVSTGLAYDVFGTPRPDSYYAQEQRSIPLVTDRFEAKQQVETFLEQLK.

Belongs to the PsbE/PsbF family. In terms of assembly, heterodimer of an alpha subunit and a beta subunit. PSII is composed of 1 copy each of membrane proteins PsbA, PsbB, PsbC, PsbD, PsbE, PsbF, PsbH, PsbI, PsbJ, PsbK, PsbL, PsbM, PsbT, PsbX, PsbY, PsbZ, Psb30/Ycf12, peripheral proteins PsbO, CyanoQ (PsbQ), PsbU, PsbV and a large number of cofactors. It forms dimeric complexes. Requires heme b as cofactor.

The protein resides in the cellular thylakoid membrane. This b-type cytochrome is tightly associated with the reaction center of photosystem II (PSII). PSII is a light-driven water:plastoquinone oxidoreductase that uses light energy to abstract electrons from H(2)O, generating O(2) and a proton gradient subsequently used for ATP formation. It consists of a core antenna complex that captures photons, and an electron transfer chain that converts photonic excitation into a charge separation. This Thermostichus vulcanus (Synechococcus vulcanus) protein is Cytochrome b559 subunit alpha.